The chain runs to 303 residues: Probable 5-dehydro-4-deoxyglucarate dehydratase (303 aa).

This sequence belongs to the DapA family.

The enzyme catalyses 5-dehydro-4-deoxy-D-glucarate + H(+) = 2,5-dioxopentanoate + CO2 + H2O. Its pathway is carbohydrate acid metabolism; D-glucarate degradation; 2,5-dioxopentanoate from D-glucarate: step 2/2. In Polaromonas naphthalenivorans (strain CJ2), this protein is Probable 5-dehydro-4-deoxyglucarate dehydratase.